The primary structure comprises 294 residues: UDP-3-O-acyl-N-acetylglucosamine deacetylase (294 aa).

Positions 75, 232, and 236 each coordinate Zn(2+). The active-site Proton donor is the histidine 259.

Belongs to the LpxC family. Zn(2+) serves as cofactor.

It carries out the reaction a UDP-3-O-[(3R)-3-hydroxyacyl]-N-acetyl-alpha-D-glucosamine + H2O = a UDP-3-O-[(3R)-3-hydroxyacyl]-alpha-D-glucosamine + acetate. The protein operates within glycolipid biosynthesis; lipid IV(A) biosynthesis; lipid IV(A) from (3R)-3-hydroxytetradecanoyl-[acyl-carrier-protein] and UDP-N-acetyl-alpha-D-glucosamine: step 2/6. Functionally, catalyzes the hydrolysis of UDP-3-O-myristoyl-N-acetylglucosamine to form UDP-3-O-myristoylglucosamine and acetate, the committed step in lipid A biosynthesis. The polypeptide is UDP-3-O-acyl-N-acetylglucosamine deacetylase (Campylobacter jejuni (strain RM1221)).